The chain runs to 192 residues: Peptidyl-tRNA hydrolase (192 aa).

Tyr18 lines the tRNA pocket. His23 serves as the catalytic Proton acceptor. Positions 69, 71, and 117 each coordinate tRNA.

It belongs to the PTH family. As to quaternary structure, monomer.

Its subcellular location is the cytoplasm. The enzyme catalyses an N-acyl-L-alpha-aminoacyl-tRNA + H2O = an N-acyl-L-amino acid + a tRNA + H(+). In terms of biological role, hydrolyzes ribosome-free peptidyl-tRNAs (with 1 or more amino acids incorporated), which drop off the ribosome during protein synthesis, or as a result of ribosome stalling. Catalyzes the release of premature peptidyl moieties from peptidyl-tRNA molecules trapped in stalled 50S ribosomal subunits, and thus maintains levels of free tRNAs and 50S ribosomes. The sequence is that of Peptidyl-tRNA hydrolase from Neisseria gonorrhoeae (strain ATCC 700825 / FA 1090).